A 78-amino-acid polypeptide reads, in one-letter code: Polcalcin Phl p 7 (78 aa).

EF-hand domains are found at residues 1-35 and 35-70; these read MADD…LGST and TSAD…NPGL. Ca(2+) is bound by residues Asp13, Asn15, Asp17, Lys19, Glu24, Asp48, Asp50, Asp52, and Glu59.

In terms of assembly, monomer. In terms of tissue distribution, specifically expressed in pollen.

Its function is as follows. May be involved in the regulation of pollen-tube growth. The chain is Polcalcin Phl p 7 from Phleum pratense (Common timothy).